Consider the following 145-residue polypeptide: MIALIQRVSRASVVVDNQTIGAIDKGLLVLLGVEQEDTREKMEKLATKVMSYRMFSDENGKMNLNLEQVGGSLLVVSQFTLAADTGRGLRPSFSGAGTPDQALALYEEFVAFCRAKGVTTETGQFGADMQVSLVNDGPVTFNLQV.

Positions Gly-137–Pro-138 match the Gly-cisPro motif, important for rejection of L-amino acids motif.

Belongs to the DTD family. In terms of assembly, homodimer.

The protein resides in the cytoplasm. It catalyses the reaction glycyl-tRNA(Ala) + H2O = tRNA(Ala) + glycine + H(+). The enzyme catalyses a D-aminoacyl-tRNA + H2O = a tRNA + a D-alpha-amino acid + H(+). Its function is as follows. An aminoacyl-tRNA editing enzyme that deacylates mischarged D-aminoacyl-tRNAs. Also deacylates mischarged glycyl-tRNA(Ala), protecting cells against glycine mischarging by AlaRS. Acts via tRNA-based rather than protein-based catalysis; rejects L-amino acids rather than detecting D-amino acids in the active site. By recycling D-aminoacyl-tRNA to D-amino acids and free tRNA molecules, this enzyme counteracts the toxicity associated with the formation of D-aminoacyl-tRNA entities in vivo and helps enforce protein L-homochirality. This chain is D-aminoacyl-tRNA deacylase, found in Shewanella baltica (strain OS155 / ATCC BAA-1091).